The chain runs to 456 residues: MSEEESQKTIGIVGAGLVGCLAALAFAKKGYDVTLFEYRPDPRTVDSSKRNLRSINLAVSSRGIRALQYVDPAMADRILEHVIPMKGRMIHDITGTKQESQVYGLNGESINSIDRSFLNNCLLDELDKSNVKILFKHKLVKLDTSNACRMTFIDGHNDAKTSTFDFVVGCDGAHSQFRYHLQKTMRMDYSQKYIDMQYLELYIPPSEDANNKFSIDANHLHIWPRHNFMLIALANKDGSFTSTFFSPWSVIEGISSSQEFVEFFRHNFPDAVGLIGEDALSSAFKSNPRGSLMQVSCYPYSNGKGIILGDAAHSMVPFYGQGMNCGFEDVRILMELIDTNNGDIEEAFKQYSAARKNDLDAICKLALDNYYEMSSKVVDIGYLIKKKLDYTLGKIFKNKWLPLYTMISFRDDIPYAKAIEIEKRQNRIMNNVGLGVLGTAAVYGLVKLGQYWNRRQ.

It belongs to the aromatic-ring hydroxylase family. KMO subfamily. The cofactor is FAD.

Its subcellular location is the mitochondrion outer membrane. It carries out the reaction L-kynurenine + NADPH + O2 + H(+) = 3-hydroxy-L-kynurenine + NADP(+) + H2O. Its pathway is cofactor biosynthesis; NAD(+) biosynthesis; quinolinate from L-kynurenine: step 1/3. Its function is as follows. Catalyzes the hydroxylation of L-kynurenine (L-Kyn) to form 3-hydroxy-L-kynurenine (L-3OHKyn). Required for synthesis of quinolinic acid. In Candida albicans (strain SC5314 / ATCC MYA-2876) (Yeast), this protein is Kynurenine 3-monooxygenase.